Here is a 104-residue protein sequence, read N- to C-terminus: DNA-directed RNA polymerase subunit omega (104 aa).

This sequence belongs to the RNA polymerase subunit omega family. As to quaternary structure, the RNAP catalytic core consists of 2 alpha, 1 beta, 1 beta' and 1 omega subunit. When a sigma factor is associated with the core the holoenzyme is formed, which can initiate transcription.

It catalyses the reaction RNA(n) + a ribonucleoside 5'-triphosphate = RNA(n+1) + diphosphate. In terms of biological role, promotes RNA polymerase assembly. Latches the N- and C-terminal regions of the beta' subunit thereby facilitating its interaction with the beta and alpha subunits. The chain is DNA-directed RNA polymerase subunit omega from Streptococcus thermophilus (strain CNRZ 1066).